The primary structure comprises 69 residues: Protein translocase subunit SecE (69 aa).

The helical transmembrane segment at 43-63 (VAGAGILVIGFVGFLIYVLLT) threads the bilayer.

Belongs to the SecE/SEC61-gamma family. Component of the Sec protein translocase complex. Heterotrimer consisting of SecY (alpha), SecG (beta) and SecE (gamma) subunits. The heterotrimers can form oligomers, although 1 heterotrimer is thought to be able to translocate proteins. Interacts with the ribosome. May interact with SecDF, and other proteins may be involved.

Its subcellular location is the cell membrane. Essential subunit of the Sec protein translocation channel SecYEG. Clamps together the 2 halves of SecY. May contact the channel plug during translocation. In Methanococcoides burtonii (strain DSM 6242 / NBRC 107633 / OCM 468 / ACE-M), this protein is Protein translocase subunit SecE.